We begin with the raw amino-acid sequence, 319 residues long: Lambda-crystallin homolog (319 aa).

Ala-2 carries the N-acetylalanine modification. At Ser-3 the chain carries Phosphoserine. Residues 16–17, Asp-36, Glu-97, and Lys-102 each bind NAD(+); that span reads LI.

Belongs to the 3-hydroxyacyl-CoA dehydrogenase family. Homodimer.

It localises to the cytoplasm. It carries out the reaction L-gulonate + NAD(+) = 3-dehydro-L-gulonate + NADH + H(+). Inhibited by malonate. Its function is as follows. Has high L-gulonate 3-dehydrogenase activity. It also exhibits low dehydrogenase activity toward L-3-hydroxybutyrate (HBA) and L-threonate. The chain is Lambda-crystallin homolog (Cryl1) from Rattus norvegicus (Rat).